A 462-amino-acid polypeptide reads, in one-letter code: L-seryl-tRNA(Sec) selenium transferase (462 aa).

Position 292 is an N6-(pyridoxal phosphate)lysine (lysine 292).

Belongs to the SelA family. Requires pyridoxal 5'-phosphate as cofactor.

It localises to the cytoplasm. The catalysed reaction is L-seryl-tRNA(Sec) + selenophosphate + H(+) = L-selenocysteinyl-tRNA(Sec) + phosphate. It participates in aminoacyl-tRNA biosynthesis; selenocysteinyl-tRNA(Sec) biosynthesis; selenocysteinyl-tRNA(Sec) from L-seryl-tRNA(Sec) (bacterial route): step 1/1. Functionally, converts seryl-tRNA(Sec) to selenocysteinyl-tRNA(Sec) required for selenoprotein biosynthesis. This Clostridium perfringens (strain 13 / Type A) protein is L-seryl-tRNA(Sec) selenium transferase.